The primary structure comprises 89 residues: Strongylocin 2 (89 aa).

A signal peptide spans 1–22 (MNIRTASFTFIVVMMILSQTMA). Positions 23–38 (DRFFNEPEEDDHLVES) are excised as a propeptide. Trp-39 carries the post-translational modification 6'-bromotryptophan.

In terms of processing, contains 3 disulfide bonds.

Its function is as follows. Has antimicrobial activity against Gram-negative bacteria and Gram-positive bacteria with minimum inhibitory concentration (MIC) between 0.78 uM and 3.13 uM. In Echinus esculentus (Sea urchin), this protein is Strongylocin 2.